A 228-amino-acid polypeptide reads, in one-letter code: NOI-like protein (228 aa).

The segment covering 56–75 (AQDHQHSEKHHNDTSTDYHV) has biased composition (basic and acidic residues). Disordered stretches follow at residues 56–87 (AQDH…HRRE) and 99–133 (RPHR…RNSD). Basic residues predominate over residues 76-86 (VKQHRRKHHRR). The segment covering 118–133 (HGTSATMSSSVKRNSD) has biased composition (polar residues).

Belongs to the RIN4 family.

The polypeptide is NOI-like protein (Elaeis oleifera (American oil palm)).